Consider the following 293-residue polypeptide: Ribonuclease H2 subunit B (293 aa).

Residues 251–278 form a disordered region; the sequence is KRPQNSDITSSLLKKPNRKQATKKSKYF. Positions 265 to 276 are enriched in basic residues; sequence KPNRKQATKKSK.

The protein belongs to the RNase H2 subunit B family. Component of the RNase H2 complex.

The protein resides in the nucleus. The protein localises to the cytoplasm. Non catalytic subunit of RNase H2, an endonuclease that specifically degrades the RNA of RNA:DNA hybrids. Participates in DNA replication, possibly by mediating the removal of lagging-strand Okazaki fragment RNA primers during DNA replication. Mediates the excision of single ribonucleotides from DNA:RNA duplexes. The sequence is that of Ribonuclease H2 subunit B (rnh202) from Schizosaccharomyces pombe (strain 972 / ATCC 24843) (Fission yeast).